Consider the following 171-residue polypeptide: Ribosome maturation factor RimP (171 aa).

The protein belongs to the RimP family.

It is found in the cytoplasm. Functionally, required for maturation of 30S ribosomal subunits. This chain is Ribosome maturation factor RimP, found in Anaeromyxobacter dehalogenans (strain 2CP-1 / ATCC BAA-258).